The sequence spans 133 residues: Small ribosomal subunit protein uS8 (133 aa).

The protein belongs to the universal ribosomal protein uS8 family. As to quaternary structure, part of the 30S ribosomal subunit.

Its function is as follows. One of the primary rRNA binding proteins, it binds directly to 16S rRNA central domain where it helps coordinate assembly of the platform of the 30S subunit. This is Small ribosomal subunit protein uS8 from Sulfolobus acidocaldarius (strain ATCC 33909 / DSM 639 / JCM 8929 / NBRC 15157 / NCIMB 11770).